The primary structure comprises 488 residues: DNA polymerase II small subunit (488 aa).

This sequence belongs to the DNA polymerase delta/II small subunit family. Heterodimer of a large subunit and a small subunit.

It catalyses the reaction DNA(n) + a 2'-deoxyribonucleoside 5'-triphosphate = DNA(n+1) + diphosphate. The catalysed reaction is Exonucleolytic cleavage in the 3'- to 5'-direction to yield nucleoside 5'-phosphates.. Possesses two activities: a DNA synthesis (polymerase) and an exonucleolytic activity that degrades single-stranded DNA in the 3' to 5' direction. Has a template-primer preference which is characteristic of a replicative DNA polymerase. The sequence is that of DNA polymerase II small subunit (polB) from Archaeoglobus fulgidus (strain ATCC 49558 / DSM 4304 / JCM 9628 / NBRC 100126 / VC-16).